Reading from the N-terminus, the 322-residue chain is uncharacterized protein (322 aa).

The segment at 174–207 is disordered; sequence LQSRPTEGAKVSTNGRGFSSRPTGEGNFFGPKGR. Over residues 184–195 the composition is skewed to polar residues; the sequence is VSTNGRGFSSRP.

It is found in the mitochondrion. This is an uncharacterized protein from Marchantia polymorpha (Common liverwort).